The chain runs to 29 residues: Cyclotide mden-F (29 aa).

The cyclopeptide (Gly-Asn) cross-link spans 1-29 (GLPICGETCFFGKCNTPKCTCINPICYKN). 3 disulfide bridges follow: Cys5–Cys19, Cys9–Cys21, and Cys14–Cys26.

It belongs to the cyclotide family. In terms of processing, this is a cyclic peptide.

Functionally, probably participates in a plant defense mechanism. This Melicytus dentatus (Tree violet) protein is Cyclotide mden-F.